The sequence spans 203 residues: Small ribosomal subunit protein uS7 (203 aa).

The interval 1-22 (MSESEAPEPDQPAGAEEATGAK) is disordered.

This sequence belongs to the universal ribosomal protein uS7 family. In terms of assembly, part of the 30S ribosomal subunit.

One of the primary rRNA binding proteins, it binds directly to 16S rRNA where it nucleates assembly of the head domain of the 30S subunit. Is located at the subunit interface close to the decoding center. The chain is Small ribosomal subunit protein uS7 from Halococcus morrhuae (Micrococcus morrhuae).